The sequence spans 781 residues: Ubiquitin carboxyl-terminal hydrolase 14 (781 aa).

Residues 169–279 (STCPHTENFQ…SALQIYGINI (111 aa)) form a UBP-type zinc finger. Zn(2+)-binding residues include cysteine 171, histidine 173, cysteine 192, cysteine 195, cysteine 204, cysteine 207, cysteine 212, histidine 224, histidine 228, histidine 235, cysteine 253, and cysteine 256. The 459-residue stretch at 323-781 (CGLINLGNSC…NGYIYFYTRC (459 aa)) folds into the USP domain. Cysteine 332 serves as the catalytic Nucleophile. UBA domains follow at residues 576–626 (DEDE…LFQH) and 649–689 (EVDE…VFNN). The Proton acceptor role is filled by histidine 737.

It belongs to the peptidase C19 family.

It is found in the cytoplasm. It localises to the nucleus. The enzyme catalyses Thiol-dependent hydrolysis of ester, thioester, amide, peptide and isopeptide bonds formed by the C-terminal Gly of ubiquitin (a 76-residue protein attached to proteins as an intracellular targeting signal).. Its function is as follows. Required for the adaptation to the presence of glucose in the growth medium; mediates the degradation of enzymes involved in gluconeogenesis when cells are shifted to glucose-containing medium. Required for proteasome-dependent catabolite degradation of fructose-1,6-bisphosphatase (FBP1). Accelerates proteasomal breakdown of ubiquitinated proteins as it disassembles free ubiquitin chains that would compete with ubiquitinated proteins to bind to the proteasome. In Saccharomyces cerevisiae (strain ATCC 204508 / S288c) (Baker's yeast), this protein is Ubiquitin carboxyl-terminal hydrolase 14 (UBP14).